The chain runs to 66 residues: Large ribosomal subunit protein uL29 (66 aa).

It belongs to the universal ribosomal protein uL29 family.

The chain is Large ribosomal subunit protein uL29 from Sinorhizobium fredii (strain NBRC 101917 / NGR234).